The chain runs to 164 residues: Large ribosomal subunit protein eL21x/eL21w (164 aa).

The protein belongs to the eukaryotic ribosomal protein eL21 family.

The polypeptide is Large ribosomal subunit protein eL21x/eL21w (RPL21E) (Arabidopsis thaliana (Mouse-ear cress)).